The sequence spans 355 residues: DNA polymerase IV (355 aa).

A UmuC domain is found at 7–188; sequence IIHIDMDCFY…LPVRKLFGVG (182 aa). Mg(2+) contacts are provided by aspartate 11 and aspartate 106. Glutamate 107 is an active-site residue.

It belongs to the DNA polymerase type-Y family. In terms of assembly, monomer. The cofactor is Mg(2+).

It is found in the cytoplasm. It carries out the reaction DNA(n) + a 2'-deoxyribonucleoside 5'-triphosphate = DNA(n+1) + diphosphate. Functionally, poorly processive, error-prone DNA polymerase involved in untargeted mutagenesis. Copies undamaged DNA at stalled replication forks, which arise in vivo from mismatched or misaligned primer ends. These misaligned primers can be extended by PolIV. Exhibits no 3'-5' exonuclease (proofreading) activity. May be involved in translesional synthesis, in conjunction with the beta clamp from PolIII. The polypeptide is DNA polymerase IV (Legionella pneumophila (strain Paris)).